Reading from the N-terminus, the 352-residue chain is tRNA pseudouridine synthase D (352 aa).

D81 functions as the Nucleophile in the catalytic mechanism. A TRUD domain is found at 157–303 (GVPNYFGTQR…MDHERRILRL (147 aa)).

This sequence belongs to the pseudouridine synthase TruD family.

The enzyme catalyses uridine(13) in tRNA = pseudouridine(13) in tRNA. Responsible for synthesis of pseudouridine from uracil-13 in transfer RNAs. This Pseudomonas putida (strain ATCC 700007 / DSM 6899 / JCM 31910 / BCRC 17059 / LMG 24140 / F1) protein is tRNA pseudouridine synthase D.